Here is a 433-residue protein sequence, read N- to C-terminus: Adenylosuccinate synthetase (433 aa).

GTP contacts are provided by residues 11–17 (GDEGKGK) and 39–41 (GHT). The Proton acceptor role is filled by D12. Mg(2+)-binding residues include D12 and G39. Residues 12 to 15 (DEGK), 37 to 40 (NAGH), T134, R148, N230, T245, and R309 each bind IMP. H40 (proton donor) is an active-site residue. 305 to 311 (VTTGRKR) lines the substrate pocket. GTP-binding positions include R311, 337 to 339 (KLD), and 419 to 421 (GTG).

It belongs to the adenylosuccinate synthetase family. Homodimer. It depends on Mg(2+) as a cofactor.

The protein resides in the cytoplasm. It catalyses the reaction IMP + L-aspartate + GTP = N(6)-(1,2-dicarboxyethyl)-AMP + GDP + phosphate + 2 H(+). The protein operates within purine metabolism; AMP biosynthesis via de novo pathway; AMP from IMP: step 1/2. Functionally, plays an important role in the de novo pathway and in the salvage pathway of purine nucleotide biosynthesis. Catalyzes the first committed step in the biosynthesis of AMP from IMP. This is Adenylosuccinate synthetase from Saccharomyces cerevisiae (strain Lalvin EC1118 / Prise de mousse) (Baker's yeast).